The primary structure comprises 253 residues: UPF0246 protein LBA1843 (253 aa).

This sequence belongs to the UPF0246 family.

The polypeptide is UPF0246 protein LBA1843 (Lactobacillus acidophilus (strain ATCC 700396 / NCK56 / N2 / NCFM)).